The following is a 91-amino-acid chain: Small ribosomal subunit protein uS17 (91 aa).

It belongs to the universal ribosomal protein uS17 family. Part of the 30S ribosomal subunit.

In terms of biological role, one of the primary rRNA binding proteins, it binds specifically to the 5'-end of 16S ribosomal RNA. The polypeptide is Small ribosomal subunit protein uS17 (Malacoplasma penetrans (strain HF-2) (Mycoplasma penetrans)).